The primary structure comprises 41 residues: Large ribosomal subunit protein bL36 (41 aa).

The protein belongs to the bacterial ribosomal protein bL36 family.

In Rhizobium etli (strain CIAT 652), this protein is Large ribosomal subunit protein bL36.